A 339-amino-acid chain; its full sequence is Heat-inducible transcription repressor HrcA (339 aa).

Belongs to the HrcA family.

Functionally, negative regulator of class I heat shock genes (grpE-dnaK-dnaJ and groELS operons). Prevents heat-shock induction of these operons. This is Heat-inducible transcription repressor HrcA from Parafrankia sp. (strain EAN1pec).